Consider the following 770-residue polypeptide: POU domain, class 2, transcription factor 1 (770 aa).

Over residues 1-26 the composition is skewed to polar residues; that stretch reads MNNPSETNKSSMESEDASTGTQTNGL. Disordered stretches follow at residues 1–33, 68–97, 262–285, and 357–385; these read MNNP…KQPV, LNVQ…VQSA, VQTL…EPSD, and LSSD…RRKK. The span at 80-97 shows a compositional bias: low complexity; that stretch reads DSQQSSQPSSQPPSVQSA. The segment covering 262–272 has biased composition (polar residues); sequence VQTLPQSQSTP. Phosphothreonine occurs at positions 271 and 277. Positions 281–355 constitute a POU-specific domain; that stretch reads EEPSDLEELE…LLEKWLNDAE (75 aa). A Phosphoserine modification is found at S284. Over residues 357–372 the composition is skewed to low complexity; that stretch reads LSSDSTASSPSALNSP. Residues 382 to 441 constitute a DNA-binding region (homeobox); sequence RRKKRTSIETNIRVALEKSFMENQKPTSEDITLIAEQLNMEKEVIRVWFCNRRQKEKRIN. 2 positions are modified to phosphoserine: S388 and S451. A compositionally biased stretch (low complexity) spans 519–580; sequence TTTAGTTDST…TNTTQTTSTP (62 aa). Positions 519 to 589 are disordered; sequence TTTAGTTDST…PLPSPLGASQ (71 aa).

Belongs to the POU transcription factor family. Class-2 subfamily. As to quaternary structure, interacts with POU2AF1; the interaction increases POU2F1 transactivation activity. Interacts with NR3C1, AR, PGR and HCFC1. Phosphorylated by PRKDC. In terms of tissue distribution, ubiquitously expressed. However, isoforms 4 and 5 are only expressed in lymphocytes.

The protein resides in the nucleus. Transcription factor that binds to the octamer motif (5'-ATTTGCAT-3') and activates the promoters of the genes for some small nuclear RNAs (snRNA) and of genes such as those for histone H2B and immunoglobulins. Modulates transcription transactivation by NR3C1, AR and PGR. This chain is POU domain, class 2, transcription factor 1 (Pou2f1), found in Mus musculus (Mouse).